The chain runs to 252 residues: 3-deoxy-manno-octulosonate cytidylyltransferase (252 aa).

Belongs to the KdsB family.

The protein localises to the cytoplasm. The enzyme catalyses 3-deoxy-alpha-D-manno-oct-2-ulosonate + CTP = CMP-3-deoxy-beta-D-manno-octulosonate + diphosphate. It participates in nucleotide-sugar biosynthesis; CMP-3-deoxy-D-manno-octulosonate biosynthesis; CMP-3-deoxy-D-manno-octulosonate from 3-deoxy-D-manno-octulosonate and CTP: step 1/1. Its pathway is bacterial outer membrane biogenesis; lipopolysaccharide biosynthesis. In terms of biological role, activates KDO (a required 8-carbon sugar) for incorporation into bacterial lipopolysaccharide in Gram-negative bacteria. This chain is 3-deoxy-manno-octulosonate cytidylyltransferase, found in Nitratidesulfovibrio vulgaris (strain DP4) (Desulfovibrio vulgaris).